We begin with the raw amino-acid sequence, 113 residues long: Endoribonuclease SymE (113 aa).

Positions 29–74 (SRYPDYSRIPAITLKGQWLEAAGFATGTVVDVKVMEGCIVLTAQPP) constitute a SpoVT-AbrB domain.

This sequence belongs to the SymE family.

The protein localises to the cytoplasm. In terms of biological role, involved in the degradation and recycling of damaged RNA. It is itself a target for degradation by the ATP-dependent protease Lon. This is Endoribonuclease SymE from Escherichia coli (strain 55989 / EAEC).